Here is a 157-residue protein sequence, read N- to C-terminus: Transcription elongation factor GreA (157 aa).

It belongs to the GreA/GreB family.

Functionally, necessary for efficient RNA polymerase transcription elongation past template-encoded arresting sites. The arresting sites in DNA have the property of trapping a certain fraction of elongating RNA polymerases that pass through, resulting in locked ternary complexes. Cleavage of the nascent transcript by cleavage factors such as GreA or GreB allows the resumption of elongation from the new 3'terminus. GreA releases sequences of 2 to 3 nucleotides. The polypeptide is Transcription elongation factor GreA (Caulobacter vibrioides (strain ATCC 19089 / CIP 103742 / CB 15) (Caulobacter crescentus)).